A 128-amino-acid chain; its full sequence is Large ribosomal subunit protein bL12 (128 aa).

The protein belongs to the bacterial ribosomal protein bL12 family. Homodimer. Part of the ribosomal stalk of the 50S ribosomal subunit. Forms a multimeric L10(L12)X complex, where L10 forms an elongated spine to which 2 to 4 L12 dimers bind in a sequential fashion. Binds GTP-bound translation factors.

Forms part of the ribosomal stalk which helps the ribosome interact with GTP-bound translation factors. Is thus essential for accurate translation. The protein is Large ribosomal subunit protein bL12 of Saccharopolyspora erythraea (strain ATCC 11635 / DSM 40517 / JCM 4748 / NBRC 13426 / NCIMB 8594 / NRRL 2338).